The chain runs to 368 residues: DNA replication and repair protein RecF (368 aa).

Residue 30–37 (GDNGAGKT) participates in ATP binding.

Belongs to the RecF family.

The protein localises to the cytoplasm. The RecF protein is involved in DNA metabolism; it is required for DNA replication and normal SOS inducibility. RecF binds preferentially to single-stranded, linear DNA. It also seems to bind ATP. The chain is DNA replication and repair protein RecF from Xanthomonas axonopodis pv. citri (strain 306).